The sequence spans 90 residues: Co-chaperonin GroES (90 aa).

It belongs to the GroES chaperonin family. In terms of assembly, heptamer of 7 subunits arranged in a ring. Interacts with the chaperonin GroEL.

The protein localises to the cytoplasm. Functionally, together with the chaperonin GroEL, plays an essential role in assisting protein folding. The GroEL-GroES system forms a nano-cage that allows encapsulation of the non-native substrate proteins and provides a physical environment optimized to promote and accelerate protein folding. GroES binds to the apical surface of the GroEL ring, thereby capping the opening of the GroEL channel. The sequence is that of Co-chaperonin GroES from Thermosipho africanus (strain TCF52B).